Reading from the N-terminus, the 200-residue chain is Large ribosomal subunit protein uL4 (200 aa).

The interval 43–72 (RAQKTRAEVSGSGKKPWRQKGTGRARSGDI) is disordered.

It belongs to the universal ribosomal protein uL4 family. In terms of assembly, part of the 50S ribosomal subunit.

One of the primary rRNA binding proteins, this protein initially binds near the 5'-end of the 23S rRNA. It is important during the early stages of 50S assembly. It makes multiple contacts with different domains of the 23S rRNA in the assembled 50S subunit and ribosome. Its function is as follows. Forms part of the polypeptide exit tunnel. The chain is Large ribosomal subunit protein uL4 from Haemophilus ducreyi (strain 35000HP / ATCC 700724).